The sequence spans 214 residues: Ras-related protein Rab-11A (214 aa).

GTP is bound by residues 20-28, 39-45, 68-72, 126-129, and 156-158; these read GDSGVGKSN, SLETKST, DTAGQ, NKSD, and SAL. An Effector region motif is present at residues 42 to 50; the sequence is TKSTIGVEF. S-geranylgeranyl cysteine attachment occurs at residues C213 and C214.

Belongs to the small GTPase superfamily. Rab family.

It is found in the contractile vacuole membrane. Functionally, required for normal contractile vacuole structure and function. Cells expressing a dominant negative rab11A exhibit a more extensive contractile vacuole network and enlarged contractile vacuole bladders. These cells exhibit a functional defect in osmotic regulation where cells immersed in water become rounded and detach from the surface, and contain swollen contractile vacuoles. The polypeptide is Ras-related protein Rab-11A (rab11A) (Dictyostelium discoideum (Social amoeba)).